The sequence spans 396 residues: 1-deoxy-D-xylulose 5-phosphate reductoisomerase (396 aa).

NADPH-binding residues include T15, G16, S17, I18, G41, and N129. 1-deoxy-D-xylulose 5-phosphate is bound at residue K130. E131 is a binding site for NADPH. D155 provides a ligand contact to Mn(2+). 1-deoxy-D-xylulose 5-phosphate contacts are provided by S156, E157, S182, and H205. Mn(2+) is bound at residue E157. G211 contacts NADPH. 1-deoxy-D-xylulose 5-phosphate is bound by residues S218, N223, K224, and E227. Position 227 (E227) interacts with Mn(2+).

Belongs to the DXR family. The cofactor is Mg(2+). Requires Mn(2+) as cofactor.

The catalysed reaction is 2-C-methyl-D-erythritol 4-phosphate + NADP(+) = 1-deoxy-D-xylulose 5-phosphate + NADPH + H(+). The protein operates within isoprenoid biosynthesis; isopentenyl diphosphate biosynthesis via DXP pathway; isopentenyl diphosphate from 1-deoxy-D-xylulose 5-phosphate: step 1/6. Catalyzes the NADPH-dependent rearrangement and reduction of 1-deoxy-D-xylulose-5-phosphate (DXP) to 2-C-methyl-D-erythritol 4-phosphate (MEP). The sequence is that of 1-deoxy-D-xylulose 5-phosphate reductoisomerase from Xanthomonas euvesicatoria pv. vesicatoria (strain 85-10) (Xanthomonas campestris pv. vesicatoria).